A 129-amino-acid polypeptide reads, in one-letter code: UPF0325 protein ECA1027 (129 aa).

It belongs to the UPF0325 family.

The sequence is that of UPF0325 protein ECA1027 from Pectobacterium atrosepticum (strain SCRI 1043 / ATCC BAA-672) (Erwinia carotovora subsp. atroseptica).